Consider the following 312-residue polypeptide: 4-hydroxyphenylacetate decarboxylase activating enzyme (312 aa).

The Radical SAM core domain occupies 16–299; it reads HDGPGCRTSV…MEHLQQLYLD (284 aa). 7 residues coordinate [4Fe-4S] cluster: C30, C34, C37, C56, C62, C65, and C101. 36 to 38 is an S-adenosyl-L-methionine binding site; sequence WCA. 4Fe-4S ferredoxin-type domains follow at residues 47 to 79 and 80 to 112; these read KHIMVAENVCKWKNGCRSCINACSHDSIKFSED and GKLKISWDTCEKCETFDCVNMCPNNALKQCVKE. S-adenosyl-L-methionine contacts are provided by residues G140, 189–191, and H263; that span reads DVK.

This sequence belongs to the organic radical-activating enzymes family. Monomer. It depends on [4Fe-4S] cluster as a cofactor.

It catalyses the reaction glycyl-[protein] + reduced [flavodoxin] + S-adenosyl-L-methionine = glycin-2-yl radical-[protein] + semiquinone [flavodoxin] + 5'-deoxyadenosine + L-methionine + H(+). Its function is as follows. Catalyzes activation of 4-hydroxyphenylacetate decarboxylase under anaerobic conditions by generation of an organic free radical on a glycine residue, via a homolytic cleavage of S-adenosyl-L-methionine (SAM). The polypeptide is 4-hydroxyphenylacetate decarboxylase activating enzyme (Clostridium scatologenes).